The sequence spans 54 residues: ATP synthase F(0) complex subunit 8 (54 aa).

A helical membrane pass occupies residues 9-25; the sequence is WVFLFFLVWLVLGFLGL.

It belongs to the ATPase protein 8 family. In terms of assembly, component of the ATP synthase complex composed at least of ATP5F1A/subunit alpha, ATP5F1B/subunit beta, ATP5MC1/subunit c (homooctomer), MT-ATP6/subunit a, MT-ATP8/subunit 8, ATP5ME/subunit e, ATP5MF/subunit f, ATP5MG/subunit g, ATP5MK/subunit k, ATP5MJ/subunit j, ATP5F1C/subunit gamma, ATP5F1D/subunit delta, ATP5F1E/subunit epsilon, ATP5PF/subunit F6, ATP5PB/subunit b, ATP5PD/subunit d, ATP5PO/subunit OSCP. ATP synthase complex consists of a soluble F(1) head domain (subunits alpha(3) and beta(3)) - the catalytic core - and a membrane F(0) domain - the membrane proton channel (subunits c, a, 8, e, f, g, k and j). These two domains are linked by a central stalk (subunits gamma, delta, and epsilon) rotating inside the F1 region and a stationary peripheral stalk (subunits F6, b, d, and OSCP).

Its subcellular location is the mitochondrion membrane. Functionally, subunit 8, of the mitochondrial membrane ATP synthase complex (F(1)F(0) ATP synthase or Complex V) that produces ATP from ADP in the presence of a proton gradient across the membrane which is generated by electron transport complexes of the respiratory chain. ATP synthase complex consist of a soluble F(1) head domain - the catalytic core - and a membrane F(1) domain - the membrane proton channel. These two domains are linked by a central stalk rotating inside the F(1) region and a stationary peripheral stalk. During catalysis, ATP synthesis in the catalytic domain of F(1) is coupled via a rotary mechanism of the central stalk subunits to proton translocation. In vivo, can only synthesize ATP although its ATP hydrolase activity can be activated artificially in vitro. Part of the complex F(0) domain. In Branchiostoma lanceolatum (Common lancelet), this protein is ATP synthase F(0) complex subunit 8.